The chain runs to 414 residues: Serine hydroxymethyltransferase (414 aa).

(6S)-5,6,7,8-tetrahydrofolate-binding positions include L116 and 120-122; that span reads GHL. K224 carries the post-translational modification N6-(pyridoxal phosphate)lysine. Residues E240 and 348–350 each bind (6S)-5,6,7,8-tetrahydrofolate; that span reads SPF.

This sequence belongs to the SHMT family. Homodimer. Requires pyridoxal 5'-phosphate as cofactor.

It localises to the cytoplasm. The enzyme catalyses (6R)-5,10-methylene-5,6,7,8-tetrahydrofolate + glycine + H2O = (6S)-5,6,7,8-tetrahydrofolate + L-serine. Its pathway is one-carbon metabolism; tetrahydrofolate interconversion. It participates in amino-acid biosynthesis; glycine biosynthesis; glycine from L-serine: step 1/1. Its function is as follows. Catalyzes the reversible interconversion of serine and glycine with tetrahydrofolate (THF) serving as the one-carbon carrier. This reaction serves as the major source of one-carbon groups required for the biosynthesis of purines, thymidylate, methionine, and other important biomolecules. Also exhibits THF-independent aldolase activity toward beta-hydroxyamino acids, producing glycine and aldehydes, via a retro-aldol mechanism. This Campylobacter fetus subsp. fetus (strain 82-40) protein is Serine hydroxymethyltransferase.